We begin with the raw amino-acid sequence, 320 residues long: ATP-dependent 6-phosphofructokinase (320 aa).

Gly12 contacts ATP. ADP contacts are provided by residues 22–26 and 55–60; these read RGVVR and RYSVSD. Residues 73 to 74 and 103 to 106 contribute to the ATP site; these read RF and GDGS. Mg(2+) is bound at residue Asp104. 126–128 provides a ligand contact to substrate; the sequence is TID. Asp128 acts as the Proton acceptor in catalysis. Residue Arg155 participates in ADP binding. Residues Arg163 and 170-172 contribute to the substrate site; that span reads MGR. Residues 186–188, Lys212, and 214–216 each bind ADP; these read GCE and KKH. Substrate contacts are provided by residues Glu223, Arg244, and 250–253; that span reads HIQR.

This sequence belongs to the phosphofructokinase type A (PFKA) family. ATP-dependent PFK group I subfamily. Prokaryotic clade 'B1' sub-subfamily. Homotetramer. It depends on Mg(2+) as a cofactor.

The protein localises to the cytoplasm. The enzyme catalyses beta-D-fructose 6-phosphate + ATP = beta-D-fructose 1,6-bisphosphate + ADP + H(+). The protein operates within carbohydrate degradation; glycolysis; D-glyceraldehyde 3-phosphate and glycerone phosphate from D-glucose: step 3/4. Allosterically activated by ADP and other diphosphonucleosides, and allosterically inhibited by phosphoenolpyruvate. Functionally, catalyzes the phosphorylation of D-fructose 6-phosphate to fructose 1,6-bisphosphate by ATP, the first committing step of glycolysis. This Serratia proteamaculans (strain 568) protein is ATP-dependent 6-phosphofructokinase.